The chain runs to 67 residues: DNA-directed RNA polymerases I, II, and III subunit RPABC5 (67 aa).

The Zn(2+) site is built by Cys-7, Cys-10, Cys-44, and Cys-45.

Belongs to the archaeal Rpo10/eukaryotic RPB10 RNA polymerase subunit family. In terms of assembly, component of the RNA polymerase I (Pol I), RNA polymerase II (Pol II) and RNA polymerase III (Pol III) complexes consisting of at least 13, 12 and 17 subunits, respectively. Pol I complex consists of a ten-subunit catalytic core composed of POLR1A/RPA1, POLR1B/RPA2, POLR1C/RPAC1, POLR1D/RPAC2, POLR1H/RPA12, POLR2E/RPABC1, POLR2F/RPABC2, POLR2H/RPABC3, POLR2K/RPABC4 and POLR2L/RPABC5; a mobile stalk subunit POLR1F/RPA43 protruding from the core and additional subunits homologous to general transcription factors POLR1E/RPA49 and POLR1G/RPA34. Part of Pol I pre-initiation complex (PIC), in which Pol I core assembles with RRN3 and promoter-bound UTBF and SL1/TIF-IB complex. Pol II complex contains a ten-subunit catalytic core composed of POLR2A/RPB1, POLR2B/RPB2, POLR2C/RPB3, POLR2I/RPB9, POLR2J/RPB11, POLR2E/RPABC1, POLR2F/RPABC2, POLR2H/RPABC3, POLR2K/RPABC4 and POLR2L/RPABC5 and a mobile stalk composed of two subunits POLR2D/RPB4 and POLR2G/RPB7. Part of Pol II(G) complex, in which Pol II core associates with an additional subunit POLR2M; unlike conventional Pol II, Pol II(G) functions as a transcriptional repressor. Part of TBP-based Pol II pre-initiation complex (PIC), in which Pol II core assembles with general transcription factors and other specific initiation factors including GTF2E1, GTF2E2, GTF2F1, GTF2F2, TCEA1, ERCC2, ERCC3, GTF2H2, GTF2H3, GTF2H4, GTF2H5, GTF2A1, GTF2A2, GTF2B and TBP; this large multi-subunit PIC complex mediates DNA unwinding and targets Pol II core to the transcription start site where the first phosphodiester bond forms. Pol III complex consists of a ten-subunit catalytic core composed of POLR3A/RPC1, POLR3B/RPC2, POLR1C/RPAC1, POLR1D/RPAC2, POLR3K/RPC10, POLR2E/RPABC1, POLR2F/RPABC2, POLR2H/RPABC3, POLR2K/RPABC4 and POLR2L/RPABC5; a mobile stalk composed of two subunits POLR3H/RPC8 and CRCP/RPC9, protruding from the core and functioning primarily in transcription initiation; and additional subunits homologous to general transcription factors of the RNA polymerase II machinery, POLR3C/RPC3-POLR3F/RPC6-POLR3G/RPC7 heterotrimer required for transcription initiation and POLR3D/RPC4-POLR3E/RPC5 heterodimer involved in both transcription initiation and termination.

Its subcellular location is the nucleus. It is found in the nucleolus. Its function is as follows. DNA-dependent RNA polymerase catalyzes the transcription of DNA into RNA using the four ribonucleoside triphosphates as substrates. Common component of RNA polymerases I, II and III which synthesize ribosomal RNA precursors, mRNA precursors and many functional non-coding RNAs, and a small RNAs, such as 5S rRNA and tRNAs, respectively. The chain is DNA-directed RNA polymerases I, II, and III subunit RPABC5 (POLR2L) from Bos taurus (Bovine).